A 294-amino-acid chain; its full sequence is Elongation factor Ts (294 aa).

The involved in Mg(2+) ion dislocation from EF-Tu stretch occupies residues 80–83 (TDFV).

This sequence belongs to the EF-Ts family.

Its subcellular location is the cytoplasm. Functionally, associates with the EF-Tu.GDP complex and induces the exchange of GDP to GTP. It remains bound to the aminoacyl-tRNA.EF-Tu.GTP complex up to the GTP hydrolysis stage on the ribosome. The sequence is that of Elongation factor Ts from Listeria monocytogenes serovar 1/2a (strain ATCC BAA-679 / EGD-e).